We begin with the raw amino-acid sequence, 190 residues long: MPRANEIKKGMVLNYNGKLLIVKNIDIQSPSARGAATLYKMRFSDVRTGLKVEERFKGDDIVDTVTLTRRFVDFSYVDGNEYVFMDKEDYTPYTFTKEQIEEELQFIPEGGMPDMQVLTWDGQLLALELPQTADLEIIETAPGIKGASASSRTKPATMSTGLVIQVPEYLTTGEKIRIHIEECRYMGRAD.

Belongs to the elongation factor P family.

The protein is Elongation factor P-like protein of Klebsiella pneumoniae subsp. pneumoniae (strain ATCC 700721 / MGH 78578).